Here is a 367-residue protein sequence, read N- to C-terminus: WAT1-related protein At3g28050 (367 aa).

10 helical membrane-spanning segments follow: residues 10-30 (VLPVTALVIMECANVGLNTLF), 40-60 (FHVFIVYSYGLAALLLLPSLF), 73-93 (FSILYKIVLLGIIGCCSNIMG), 103-123 (TLASAISNLTPAFTFLLAVVF), 142-162 (TVVSIGGAFIVTLYNGPVVIA), 179-199 (WILGAGFLAVEYFCVPLWYIV), 211-231 (FTVVCFYSIGVSFWTALVTLF), 246-266 (IALVSIVCSGLFGSCINNTIH), 276-296 (LFVAMFKPLSIAIAVAMGVIF), and 301-321 (LYIGSLIGATVITIGFYTVMW). EamA domains lie at 25-153 (GLNT…FIVT) and 195-319 (LWYI…FYTV). Residues 338–367 (HEEANEADLDSPSGSQKAPLLESYKNDEHV) form a disordered region.

The protein belongs to the drug/metabolite transporter (DMT) superfamily. Plant drug/metabolite exporter (P-DME) (TC 2.A.7.4) family.

Its subcellular location is the membrane. This chain is WAT1-related protein At3g28050, found in Arabidopsis thaliana (Mouse-ear cress).